Reading from the N-terminus, the 155-residue chain is Pathogenesis-related protein STH-2 (155 aa).

This sequence belongs to the BetVI family.

The polypeptide is Pathogenesis-related protein STH-2 (STH-2) (Solanum tuberosum (Potato)).